We begin with the raw amino-acid sequence, 488 residues long: Probable malate:quinone oxidoreductase (488 aa).

It belongs to the MQO family. Requires FAD as cofactor.

The catalysed reaction is (S)-malate + a quinone = a quinol + oxaloacetate. It participates in carbohydrate metabolism; tricarboxylic acid cycle; oxaloacetate from (S)-malate (quinone route): step 1/1. The protein is Probable malate:quinone oxidoreductase of Neisseria meningitidis serogroup C / serotype 2a (strain ATCC 700532 / DSM 15464 / FAM18).